Here is a 669-residue protein sequence, read N- to C-terminus: Threonine--tRNA ligase (669 aa).

The region spanning 3–60 (DAQQITLLVDGEETKVTTGTTGAELFFERRDVVVARVNGELKDLDQELPEGAEVEGVT) is the TGS domain. A catalytic region spans residues 260-566 (DHRKLGSELD…LTEHYAGAFP (307 aa)). Positions 365, 416, and 543 each coordinate Zn(2+).

Belongs to the class-II aminoacyl-tRNA synthetase family. Homodimer. The cofactor is Zn(2+).

Its subcellular location is the cytoplasm. The catalysed reaction is tRNA(Thr) + L-threonine + ATP = L-threonyl-tRNA(Thr) + AMP + diphosphate + H(+). Its function is as follows. Catalyzes the attachment of threonine to tRNA(Thr) in a two-step reaction: L-threonine is first activated by ATP to form Thr-AMP and then transferred to the acceptor end of tRNA(Thr). Also edits incorrectly charged L-seryl-tRNA(Thr). The protein is Threonine--tRNA ligase of Pseudarthrobacter chlorophenolicus (strain ATCC 700700 / DSM 12829 / CIP 107037 / JCM 12360 / KCTC 9906 / NCIMB 13794 / A6) (Arthrobacter chlorophenolicus).